Here is a 211-residue protein sequence, read N- to C-terminus: Small ribosomal subunit protein bS6c alpha (211 aa).

Low complexity predominate over residues 1-19; sequence MATFSLTSTLPSSSPTTSL. 2 disordered regions span residues 1-25 and 80-100; these read MATF…IPKP and DEDP…PEPQ. A chloroplast-targeting transit peptide spans 1 to 65; that stretch reads MATFSLTSTL…YGPYVKAIAL (65 aa).

The protein belongs to the bacterial ribosomal protein bS6 family. Component of the chloroplast small ribosomal subunit (SSU). Mature 70S chloroplast ribosomes of higher plants consist of a small (30S) and a large (50S) subunit. The 30S small subunit contains 1 molecule of ribosomal RNA (16S rRNA) and 24 different proteins. The 50S large subunit contains 3 rRNA molecules (23S, 5S and 4.5S rRNA) and 33 different proteins.

It is found in the plastid. The protein resides in the chloroplast. Functionally, component of the chloroplast ribosome (chloro-ribosome), a dedicated translation machinery responsible for the synthesis of chloroplast genome-encoded proteins, including proteins of the transcription and translation machinery and components of the photosynthetic apparatus. The protein is Small ribosomal subunit protein bS6c alpha (RPS6) of Spinacia oleracea (Spinach).